The chain runs to 518 residues: Ribonuclease Y (518 aa).

Residues 2-22 (GSIIISALLALVIGAVVGFFV) traverse the membrane as a helical segment. Positions 208–271 (TVSVVNLPND…ETARIALDKL (64 aa)) constitute a KH domain. The region spanning 334–427 (VLKHSVEVAF…VAAADALSAA (94 aa)) is the HD domain.

The protein belongs to the RNase Y family.

The protein localises to the cell membrane. Functionally, endoribonuclease that initiates mRNA decay. The polypeptide is Ribonuclease Y (Geobacillus thermodenitrificans (strain NG80-2)).